The sequence spans 200 residues: dITP/XTP pyrophosphatase (200 aa).

7-12 is a binding site for substrate; that stretch reads SNNRGK. Aspartate 68 acts as the Proton acceptor in catalysis. Aspartate 68 contributes to the Mg(2+) binding site. Residues alanine 69, 154-157, lysine 177, and 182-183 each bind substrate; these read FGFD and HR.

This sequence belongs to the HAM1 NTPase family. Homodimer. Requires Mg(2+) as cofactor.

The enzyme catalyses XTP + H2O = XMP + diphosphate + H(+). It catalyses the reaction dITP + H2O = dIMP + diphosphate + H(+). The catalysed reaction is ITP + H2O = IMP + diphosphate + H(+). Pyrophosphatase that catalyzes the hydrolysis of nucleoside triphosphates to their monophosphate derivatives, with a high preference for the non-canonical purine nucleotides XTP (xanthosine triphosphate), dITP (deoxyinosine triphosphate) and ITP. Seems to function as a house-cleaning enzyme that removes non-canonical purine nucleotides from the nucleotide pool, thus preventing their incorporation into DNA/RNA and avoiding chromosomal lesions. This is dITP/XTP pyrophosphatase from Delftia acidovorans (strain DSM 14801 / SPH-1).